The chain runs to 380 residues: 3-isopropylmalate dehydratase large subunit 2 (380 aa).

Residues C262, C320, and C323 each coordinate [4Fe-4S] cluster.

This sequence belongs to the aconitase/IPM isomerase family. LeuC type 2 subfamily. In terms of assembly, heterodimer of LeuC and LeuD. It depends on [4Fe-4S] cluster as a cofactor.

The catalysed reaction is (2R,3S)-3-isopropylmalate = (2S)-2-isopropylmalate. It functions in the pathway amino-acid biosynthesis; L-leucine biosynthesis; L-leucine from 3-methyl-2-oxobutanoate: step 2/4. Functionally, catalyzes the isomerization between 2-isopropylmalate and 3-isopropylmalate, via the formation of 2-isopropylmaleate. This Pyrococcus furiosus (strain ATCC 43587 / DSM 3638 / JCM 8422 / Vc1) protein is 3-isopropylmalate dehydratase large subunit 2.